The primary structure comprises 62 residues: Photosystem II reaction center protein Z (62 aa).

Transmembrane regions (helical) follow at residues 8–28 (ALFA…VAFA) and 41–61 (FQGV…NSLV).

The protein belongs to the PsbZ family. In terms of assembly, PSII is composed of 1 copy each of membrane proteins PsbA, PsbB, PsbC, PsbD, PsbE, PsbF, PsbH, PsbI, PsbJ, PsbK, PsbL, PsbM, PsbT, PsbY, PsbZ, Psb30/Ycf12, at least 3 peripheral proteins of the oxygen-evolving complex and a large number of cofactors. It forms dimeric complexes.

The protein resides in the plastid. The protein localises to the chloroplast thylakoid membrane. In terms of biological role, may control the interaction of photosystem II (PSII) cores with the light-harvesting antenna, regulates electron flow through the 2 photosystem reaction centers. PSII is a light-driven water plastoquinone oxidoreductase, using light energy to abstract electrons from H(2)O, generating a proton gradient subsequently used for ATP formation. The protein is Photosystem II reaction center protein Z of Nephroselmis olivacea (Green alga).